The primary structure comprises 370 residues: Phosphoserine aminotransferase (370 aa).

Arg42 serves as a coordination point for L-glutamate. Positions 108, 158, 182, and 205 each coordinate pyridoxal 5'-phosphate. Lys206 carries the post-translational modification N6-(pyridoxal phosphate)lysine. 247-248 is a binding site for pyridoxal 5'-phosphate; that stretch reads NT.

This sequence belongs to the class-V pyridoxal-phosphate-dependent aminotransferase family. SerC subfamily. As to quaternary structure, homodimer. Pyridoxal 5'-phosphate is required as a cofactor.

It localises to the cytoplasm. The enzyme catalyses O-phospho-L-serine + 2-oxoglutarate = 3-phosphooxypyruvate + L-glutamate. It carries out the reaction 4-(phosphooxy)-L-threonine + 2-oxoglutarate = (R)-3-hydroxy-2-oxo-4-phosphooxybutanoate + L-glutamate. The protein operates within amino-acid biosynthesis; L-serine biosynthesis; L-serine from 3-phospho-D-glycerate: step 2/3. It functions in the pathway cofactor biosynthesis; pyridoxine 5'-phosphate biosynthesis; pyridoxine 5'-phosphate from D-erythrose 4-phosphate: step 3/5. Its function is as follows. Catalyzes the reversible conversion of 3-phosphohydroxypyruvate to phosphoserine and of 3-hydroxy-2-oxo-4-phosphonooxybutanoate to phosphohydroxythreonine. The chain is Phosphoserine aminotransferase from Albidiferax ferrireducens (strain ATCC BAA-621 / DSM 15236 / T118) (Rhodoferax ferrireducens).